Consider the following 312-residue polypeptide: tRNA uridine(34) hydroxylase (312 aa).

Residues 123–216 form the Rhodanese domain; the sequence is DRDDVVVLDV…YGIEQGGEDF (94 aa). The Cysteine persulfide intermediate role is filled by C176.

Belongs to the TrhO family.

It carries out the reaction uridine(34) in tRNA + AH2 + O2 = 5-hydroxyuridine(34) in tRNA + A + H2O. Functionally, catalyzes oxygen-dependent 5-hydroxyuridine (ho5U) modification at position 34 in tRNAs. In Cytophaga hutchinsonii (strain ATCC 33406 / DSM 1761 / CIP 103989 / NBRC 15051 / NCIMB 9469 / D465), this protein is tRNA uridine(34) hydroxylase.